A 393-amino-acid polypeptide reads, in one-letter code: Putative F-box protein At1g55070 (393 aa).

Residues 29–74 enclose the F-box domain; it reads GEYFDRIPADLVIKILSKLSAKSMAKCRCVCKLLSSIIRQPNYNQL.

The sequence is that of Putative F-box protein At1g55070 from Arabidopsis thaliana (Mouse-ear cress).